Consider the following 105-residue polypeptide: Small ribosomal subunit protein uS10 (105 aa).

This sequence belongs to the universal ribosomal protein uS10 family. In terms of assembly, part of the 30S ribosomal subunit.

In terms of biological role, involved in the binding of tRNA to the ribosomes. This is Small ribosomal subunit protein uS10 from Maridesulfovibrio salexigens (strain ATCC 14822 / DSM 2638 / NCIMB 8403 / VKM B-1763) (Desulfovibrio salexigens).